Consider the following 547-residue polypeptide: Probable bifunctional tRNA threonylcarbamoyladenosine biosynthesis protein (547 aa).

The tract at residues 1 to 329 (MKKTFILGIE…FRTDDVKVTW (329 aa)) is kae1. Positions 113, 117, and 134 each coordinate Fe cation. L-threonylcarbamoyladenylate contacts are provided by residues 134-138 (YVSGA), Asp166, Gly179, Glu183, and Asn262. A Fe cation-binding site is contributed by Asp290. Residues 340-547 (EISPETFFRM…EEIKKRARYA (208 aa)) enclose the Protein kinase domain. ATP contacts are provided by residues 355–363 (LDNGAEAVV) and Lys377. The active-site Proton acceptor; for kinase activity is Asp464.

In the N-terminal section; belongs to the KAE1 / TsaD family. This sequence in the C-terminal section; belongs to the protein kinase superfamily. Tyr protein kinase family. BUD32 subfamily. In terms of assembly, component of the KEOPS complex that consists of Kae1, Bud32, Cgi121 and Pcc1; the whole complex dimerizes. It depends on Fe(2+) as a cofactor.

It is found in the cytoplasm. The catalysed reaction is L-seryl-[protein] + ATP = O-phospho-L-seryl-[protein] + ADP + H(+). It catalyses the reaction L-threonyl-[protein] + ATP = O-phospho-L-threonyl-[protein] + ADP + H(+). It carries out the reaction L-threonylcarbamoyladenylate + adenosine(37) in tRNA = N(6)-L-threonylcarbamoyladenosine(37) in tRNA + AMP + H(+). Required for the formation of a threonylcarbamoyl group on adenosine at position 37 (t(6)A37) in tRNAs that read codons beginning with adenine. Is a component of the KEOPS complex that is probably involved in the transfer of the threonylcarbamoyl moiety of threonylcarbamoyl-AMP (TC-AMP) to the N6 group of A37. The Kae1 domain likely plays a direct catalytic role in this reaction. The Bud32 domain probably displays kinase activity that regulates Kae1 function. In Methanosarcina mazei (strain ATCC BAA-159 / DSM 3647 / Goe1 / Go1 / JCM 11833 / OCM 88) (Methanosarcina frisia), this protein is Probable bifunctional tRNA threonylcarbamoyladenosine biosynthesis protein.